A 217-amino-acid chain; its full sequence is Ribosomal RNA small subunit methyltransferase G (217 aa).

S-adenosyl-L-methionine is bound by residues glycine 74, leucine 79, 125–126 (IQ), and arginine 143.

The protein belongs to the methyltransferase superfamily. RNA methyltransferase RsmG family.

The protein resides in the cytoplasm. The catalysed reaction is guanosine(527) in 16S rRNA + S-adenosyl-L-methionine = N(7)-methylguanosine(527) in 16S rRNA + S-adenosyl-L-homocysteine. Functionally, specifically methylates the N7 position of guanine in position 527 of 16S rRNA. The polypeptide is Ribosomal RNA small subunit methyltransferase G (Syntrophotalea carbinolica (strain DSM 2380 / NBRC 103641 / GraBd1) (Pelobacter carbinolicus)).